Consider the following 363-residue polypeptide: Ribosomal RNA large subunit methyltransferase M (363 aa).

Residues Ser-187, 220 to 223 (CPGG), Asp-239, Asp-259, and Asp-276 contribute to the S-adenosyl-L-methionine site. Lys-305 serves as the catalytic Proton acceptor.

It belongs to the class I-like SAM-binding methyltransferase superfamily. RNA methyltransferase RlmE family. RlmM subfamily. Monomer.

Its subcellular location is the cytoplasm. The catalysed reaction is cytidine(2498) in 23S rRNA + S-adenosyl-L-methionine = 2'-O-methylcytidine(2498) in 23S rRNA + S-adenosyl-L-homocysteine + H(+). Functionally, catalyzes the 2'-O-methylation at nucleotide C2498 in 23S rRNA. This Shewanella loihica (strain ATCC BAA-1088 / PV-4) protein is Ribosomal RNA large subunit methyltransferase M.